Here is an 80-residue protein sequence, read N- to C-terminus: U19-lycotoxin-Ls1a (80 aa).

The signal sequence occupies residues 1–22 (MSPKVQALIFIVGLITLLAAHA). Residues 23 to 34 (QEELSDNTESER) constitute a propeptide that is removed on maturation. Cystine bridges form between C36-C50, C43-C55, C49-C66, and C57-C64.

The protein belongs to the neurotoxin 02 (plectoxin) family. 05 (U19-lycotoxin) subfamily. In terms of tissue distribution, expressed by the venom gland.

It localises to the secreted. This is U19-lycotoxin-Ls1a from Lycosa singoriensis (Wolf spider).